A 170-amino-acid polypeptide reads, in one-letter code: Calcineurin subunit B type 2 (170 aa).

EF-hand domains follow at residues 18–46 (DEIRRLGKRFRKLDLDNSGALSVDEFMSL), 50–85 (QQNPLVQRVIDIFDADGNGEVDFKEFIQGVSQFSVK), 87–122 (DKLSKLRFAFRIYDMDNDGYISNGELFQVLKMMVGN), and 128–163 (QLQQIVDKTIGFADKDEDGKISFDEFCSVVGNTDIH). Residues D31, D33, S35, E42, D63, D65, N67, E69, E74, D100, D102, D104, Y106, E111, D141, D143, D145, K147, and E152 each coordinate Ca(2+). S35 bears the Phosphoserine mark.

The protein belongs to the calcineurin regulatory subunit family. Composed of a catalytic subunit (A) and a regulatory subunit (B). Interacts with sra.

In terms of biological role, calcineurin is a calcium-binding and calmodulin-binding protein found in all cells from yeast to mammals, and a calcium-dependent, calmodulin-stimulated protein phosphatase. This Drosophila melanogaster (Fruit fly) protein is Calcineurin subunit B type 2 (CanB2).